Consider the following 327-residue polypeptide: MAAVVEVEVGGGALAERELDEVDMSDLSPEEQWRVEHARMHAKHRGHEAMHAEMVLILIATLVVAQLLLVQWKQRHPRSYNMVTLFQMWVVPLYFTVKLHWWRFLVIWIFFSAVTAFVTFRATRKPLVQTTPRLVYKWFLLIYKISYATGIVGYMAVMFTLFGLNLLFKIKPEDAMDFGISLLFYGLYYGVLERDFAEMCADYMASTIGFYSESGMPTKHLSDSVCAVCGQQIFVDVNEEGIIENTYRLSCNHVFHEFCIRGWCIVGKKQTCPYCKEKVDLKRMFSNPWERPHVMYGQLLDWLRYLVAWQPVIIGLVQGISYILGLE.

An N-acetylalanine modification is found at Ala2. The next 5 membrane-spanning stretches (helical) occupy residues 50 to 70, 79 to 99, 100 to 120, 148 to 168, and 172 to 192; these read MHAE…LLLV, SYNM…TVKL, HWWR…FVTF, ATGI…NLLF, and PEDA…YGVL. The segment at 226 to 276 adopts an RING-type; atypical zinc-finger fold; that stretch reads CAVCGQQIFVDVNEEGIIENTYRLSCNHVFHEFCIRGWCIVGKKQTCPYCK. Residues 306-326 traverse the membrane as a helical segment; sequence LVAWQPVIIGLVQGISYILGL.

This sequence belongs to the RNF121 family.

It is found in the endoplasmic reticulum membrane. The enzyme catalyses S-ubiquitinyl-[E2 ubiquitin-conjugating enzyme]-L-cysteine + [acceptor protein]-L-lysine = [E2 ubiquitin-conjugating enzyme]-L-cysteine + N(6)-ubiquitinyl-[acceptor protein]-L-lysine.. It functions in the pathway protein modification; protein ubiquitination. E3 ubiquitin ligase which accepts ubiquitin and transfers it to substrates thereby promoting their degradation by the endoplasmic reticulum-associated degradation (ERAD) pathway which is a pathway involved in ubiquitin-dependent degradation of misfolded endoplasmic reticulum proteins. May regulate the unfolded protein response to reduce endoplasmic reticulum stress. The chain is E3 ubiquitin ligase Rnf121 (Rnf121) from Mus musculus (Mouse).